The sequence spans 291 residues: Protease HtpX (291 aa).

The next 2 helical transmembrane spans lie at 4–24 (ILLF…TLKL) and 36–56 (GSLL…SLFI). His142 contributes to the Zn(2+) binding site. The active site involves Glu143. A Zn(2+)-binding site is contributed by His146. Transmembrane regions (helical) follow at residues 150 to 170 (GDMV…MFFA) and 193 to 213 (FVAT…IVMW). Glu219 contributes to the Zn(2+) binding site.

This sequence belongs to the peptidase M48B family. Zn(2+) is required as a cofactor.

It localises to the cell inner membrane. The chain is Protease HtpX from Pseudomonas aeruginosa (strain LESB58).